Consider the following 355-residue polypeptide: DNA polymerase IV (355 aa).

The UmuC domain maps to 7 to 188; the sequence is IIHIDMDCFY…LPVRKLFGVG (182 aa). Positions 11 and 106 each coordinate Mg(2+). Residue Glu-107 is part of the active site.

The protein belongs to the DNA polymerase type-Y family. In terms of assembly, monomer. It depends on Mg(2+) as a cofactor.

The protein resides in the cytoplasm. The enzyme catalyses DNA(n) + a 2'-deoxyribonucleoside 5'-triphosphate = DNA(n+1) + diphosphate. Its function is as follows. Poorly processive, error-prone DNA polymerase involved in untargeted mutagenesis. Copies undamaged DNA at stalled replication forks, which arise in vivo from mismatched or misaligned primer ends. These misaligned primers can be extended by PolIV. Exhibits no 3'-5' exonuclease (proofreading) activity. May be involved in translesional synthesis, in conjunction with the beta clamp from PolIII. This chain is DNA polymerase IV, found in Legionella pneumophila (strain Paris).